Here is a 113-residue protein sequence, read N- to C-terminus: Mediator of RNA polymerase II transcription subunit 22 (113 aa).

This sequence belongs to the Mediator complex subunit 22 family. As to quaternary structure, component of the Mediator complex.

The protein resides in the nucleus. In terms of biological role, component of the Mediator complex, a coactivator involved in the regulated transcription of nearly all RNA polymerase II-dependent genes. Mediator functions as a bridge to convey information from gene-specific regulatory proteins to the basal RNA polymerase II transcription machinery. Mediator is recruited to promoters by direct interactions with regulatory proteins and serves as a scaffold for the assembly of a functional preinitiation complex with RNA polymerase II and the general transcription factors. The protein is Mediator of RNA polymerase II transcription subunit 22 (SRB6) of Candida glabrata (strain ATCC 2001 / BCRC 20586 / JCM 3761 / NBRC 0622 / NRRL Y-65 / CBS 138) (Yeast).